The primary structure comprises 114 residues: MLEVIKAIEAEQVRNDLPEFHVGDTVKVHQKIKEGTRERVQIFEGTVLKRQNGGARETFTVRRVAYNVAVEKTFPVNSPLIEKIQVVRKGKVRRAKLYYLRDRVGKAAKVKERI.

Belongs to the bacterial ribosomal protein bL19 family.

Its function is as follows. This protein is located at the 30S-50S ribosomal subunit interface and may play a role in the structure and function of the aminoacyl-tRNA binding site. The chain is Large ribosomal subunit protein bL19 from Clostridium botulinum (strain Loch Maree / Type A3).